A 278-amino-acid chain; its full sequence is C-type lectin domain family 1 member A (278 aa).

The segment at 1 to 42 is disordered; the sequence is MLAKYSSTRDMLDADGDTTMSLHSQASATSQRPELGHTEHQR. Residues 1–52 are Cytoplasmic-facing; it reads MLAKYSSTRDMLDADGDTTMSLHSQASATSQRPELGHTEHQRPSSAWRPVAL. Over residues 18 to 32 the composition is skewed to polar residues; that stretch reads TTMSLHSQASATSQR. The chain crosses the membrane as a helical; Signal-anchor for type II membrane protein span at residues 53–73; that stretch reads ILLTLCLVLLIGLAALGLVFF. Over 74 to 278 the chain is Extracellular; that stretch reads QFYQLSNTQQ…LHEPLSRRWR (205 aa). N-linked (GlcNAc...) asparagine glycosylation is found at Asn-95 and Asn-169. One can recognise a C-type lectin domain in the interval 144-258; the sequence is HGDKCYQFYK…CRELRRCACE (115 aa). 2 cysteine pairs are disulfide-bonded: Cys-165–Cys-257 and Cys-236–Cys-249.

The protein localises to the membrane. The polypeptide is C-type lectin domain family 1 member A (CLEC1A) (Bos taurus (Bovine)).